The sequence spans 621 residues: Chaperone protein DnaK (621 aa).

Threonine 179 is modified (phosphothreonine; by autocatalysis). The span at 583 to 605 (SQVQDTQGAAQGQSQGNPQQTAD) shows a compositional bias: polar residues. Residues 583–621 (SQVQDTQGAAQGQSQGNPQQTADNRGKVVDAEIVDENKE) are disordered. Basic and acidic residues predominate over residues 606–621 (NRGKVVDAEIVDENKE).

Belongs to the heat shock protein 70 family.

Acts as a chaperone. The protein is Chaperone protein DnaK of Endomicrobium trichonymphae.